Consider the following 234-residue polypeptide: Probable chemoreceptor glutamine deamidase CheD 1 (234 aa).

The tract at residues 183 to 234 is disordered; the sequence is AREAAGPRGERAARARPRVELFGTPAPKAQATPRIELFGTRATQPATRKQEA. Residues 190 to 201 are compositionally biased toward basic and acidic residues; it reads RGERAARARPRV. The span at 223–234 shows a compositional bias: polar residues; that stretch reads RATQPATRKQEA.

This sequence belongs to the CheD family.

It carries out the reaction L-glutaminyl-[protein] + H2O = L-glutamyl-[protein] + NH4(+). Probably deamidates glutamine residues to glutamate on methyl-accepting chemotaxis receptors (MCPs), playing an important role in chemotaxis. This Burkholderia thailandensis (strain ATCC 700388 / DSM 13276 / CCUG 48851 / CIP 106301 / E264) protein is Probable chemoreceptor glutamine deamidase CheD 1.